A 919-amino-acid chain; its full sequence is PAX3- and PAX7-binding protein 1 (919 aa).

Over residues 1 to 11 the composition is skewed to basic residues; it reads MFRKARRVNVR. 3 disordered regions span residues 1 to 120, 151 to 206, and 237 to 277; these read MFRK…ENEE, KTEL…GGAF, and AREL…RIVF. At S16 the chain carries Phosphoserine. Residues 16 to 28 are compositionally biased toward acidic residues; it reads SEEEERERDEEQE. Residues 49–59 are compositionally biased toward low complexity; it reads RAPAGESLLGP. Residues 75–87 are compositionally biased toward gly residues; the sequence is AEAGGGISGGAEP. Residue K151 forms a Glycyl lysine isopeptide (Lys-Gly) (interchain with G-Cter in SUMO1); alternate linkage. A Glycyl lysine isopeptide (Lys-Gly) (interchain with G-Cter in SUMO2); alternate cross-link involves residue K151. S160 carries the phosphoserine modification. Positions 163-174 are enriched in basic and acidic residues; it reads PLDKTCHAKDTN. Positions 185–195 are enriched in acidic residues; the sequence is GEDEMDMESEK. A Phosphoserine modification is found at S193. The span at 237-258 shows a compositional bias: basic and acidic residues; that stretch reads ARELGDFTPHDSEPGKGRLVRE. Positions 259–270 are enriched in acidic residues; the sequence is DENDASDDEDDD. S264, S297, S559, and S560 each carry phosphoserine. The tract at residues 380–560 is necessary and sufficient for interaction with PAX7; it reads TPSNEMAPVT…MADHLEGLSS (181 aa). The disordered stretch occupies residues 533-566; sequence EREARRTRRRQAREQTGQMADHLEGLSSDDEETS. At T565 the chain carries Phosphothreonine.

The protein belongs to the GCF family. As to quaternary structure, interacts with PAX3 and PAX7. Interacts with WDR5; associates with a histone methyltransferase (HMT) complex composed at least of RBBP5, ASH2L, SET1, SET2 and KMT2A/MLL1, KMT2D/MLL2, KMT2C/MLL3 and KMT2B/MLL4 through direct interaction with WDR5. Ubiquitously expressed in all tissues tested including skeletal muscle. Expressed in primary myoblasts.

It is found in the nucleus. In terms of biological role, adapter protein linking the transcription factors PAX3 and PAX7 to the histone methylation machinery and involved in myogenesis. Associates with a histone methyltransferase complex that specifically mediates dimethylation and trimethylation of 'Lys-4' of histone H3. Mediates the recruitment of that complex to the transcription factors PAX3 and PAX7 on chromatin to regulate the expression of genes involved in muscle progenitor cells proliferation including ID3 and CDC20. This chain is PAX3- and PAX7-binding protein 1 (Paxbp1), found in Mus musculus (Mouse).